We begin with the raw amino-acid sequence, 623 residues long: Chaperone protein HtpG (623 aa).

The interval 1 to 326 (MAEEKRQFQA…SQDLPLNVSR (326 aa)) is a; substrate-binding. The segment at 327–543 (EMLQHNPVLS…EGEMSMHLEK (217 aa)) is b. Residues 544-623 (MLRAHNQAPG…VSVMEKGLLG (80 aa)) are c.

It belongs to the heat shock protein 90 family. Homodimer.

The protein localises to the cytoplasm. Molecular chaperone. Has ATPase activity. This chain is Chaperone protein HtpG, found in Paramagnetospirillum magneticum (strain ATCC 700264 / AMB-1) (Magnetospirillum magneticum).